The primary structure comprises 359 residues: Putative cyclin-F1-2 (359 aa).

It belongs to the cyclin family. Cyclin F subfamily.

The protein is Putative cyclin-F1-2 (CYCF1-2) of Oryza sativa subsp. japonica (Rice).